A 214-amino-acid polypeptide reads, in one-letter code: Small ribosomal subunit protein eS6 (214 aa).

This sequence belongs to the eukaryotic ribosomal protein eS6 family.

This is Small ribosomal subunit protein eS6 from Saccharolobus islandicus (strain L.S.2.15 / Lassen #1) (Sulfolobus islandicus).